An 83-amino-acid chain; its full sequence is Small ribosomal subunit protein bS18 (83 aa).

Belongs to the bacterial ribosomal protein bS18 family. In terms of assembly, part of the 30S ribosomal subunit. Forms a tight heterodimer with protein bS6.

Functionally, binds as a heterodimer with protein bS6 to the central domain of the 16S rRNA, where it helps stabilize the platform of the 30S subunit. In Desulfosudis oleivorans (strain DSM 6200 / JCM 39069 / Hxd3) (Desulfococcus oleovorans), this protein is Small ribosomal subunit protein bS18.